The chain runs to 75 residues: Dermaseptin-SP3 (75 aa).

The N-terminal stretch at 1 to 22 (MAFLKKSLFLVLFLGLVSLSMC) is a signal peptide. Positions 23–45 (EEEKRENEVEEEQEDDEQSELRR) are excised as a propeptide. Pro72 is modified (proline amide). Positions 74 to 75 (EQ) are excised as a propeptide.

This sequence belongs to the frog skin active peptide (FSAP) family. Dermaseptin subfamily. In terms of tissue distribution, expressed by the skin glands.

It localises to the secreted. The protein resides in the target cell membrane. Its function is as follows. Antimicrobial peptide with activity against Gram-positive and Gram-negative bacteria and fungi. Has been tested against E.coli (MIC=47.50-128 uM), S.aureus (MIC=189.98-512 uM), K.pneumoniae (MIC&gt;189.98 uM) and C.albicans (MIC&gt;189.98 uM). Probably acts by disturbing membrane functions with its alpha-helical amphipathic structure. May penetrate bacterial membranes, but stay at the mammalian membrane surface. Shows a very weak hemolytic activity. The sequence is that of Dermaseptin-SP3 from Agalychnis spurrelli (Gliding leaf frog).